Consider the following 517-residue polypeptide: Protein MGF 505-2R (517 aa).

Belongs to the asfivirus MGF 505 family.

Plays a role in virus cell tropism, and may be required for efficient virus replication in macrophages. This chain is Protein MGF 505-2R, found in African swine fever virus (isolate Warthog/Namibia/Wart80/1980) (ASFV).